Reading from the N-terminus, the 194-residue chain is Peptidyl-tRNA hydrolase (194 aa).

A tRNA-binding site is contributed by tyrosine 16. Histidine 21 functions as the Proton acceptor in the catalytic mechanism. TRNA contacts are provided by phenylalanine 67, asparagine 69, and asparagine 115.

Belongs to the PTH family. In terms of assembly, monomer.

Its subcellular location is the cytoplasm. It catalyses the reaction an N-acyl-L-alpha-aminoacyl-tRNA + H2O = an N-acyl-L-amino acid + a tRNA + H(+). Functionally, hydrolyzes ribosome-free peptidyl-tRNAs (with 1 or more amino acids incorporated), which drop off the ribosome during protein synthesis, or as a result of ribosome stalling. In terms of biological role, catalyzes the release of premature peptidyl moieties from peptidyl-tRNA molecules trapped in stalled 50S ribosomal subunits, and thus maintains levels of free tRNAs and 50S ribosomes. This Salmonella agona (strain SL483) protein is Peptidyl-tRNA hydrolase.